The following is a 1648-amino-acid chain: MSMFNALNSNIEGEQYEAEEHSRELQIEQSFNILQDALIDLKNKDFEKSDSKFQELFQIDVVKPDRWGMYRNSSPTLDNLRYLCYRNRGMYYHLYLENNYERLNSQELVNCILKAVENLVESIQHSDADFAVTDLLARIFKSFNSVKLERLISEYEFTKQENLSLLLGRHRKFLLNDLTLMMNNYVELTNKLLVPNLSDNTIFERYHLEKYKDIKPEPLAFGPILSRISEMKKQDEEIMKKLDVFNVTLNEESWDEVAKALKNLLPSVKTSSLIGRNMDPYNEIEEPIEAVKFELSEAINNTPSLDRESERQEEEQDNESVRADDKSGNLAPSDIQTNEEARPNKRTDEHIDSTKPLQRSSKRFKEREQENSKELVMDVHKRFFGEFNTLLSYIHILPFCDFDTFASKFIIGSSDKQPEKFIPYTDLYECLKSWSSRYTDIFNQNDYLSSGSNENEELFQLNALLKSNAFDDKESFPRYLNDLDSDHIRSFISEVNAGNLHFHQVRLKLLFKLLGTYDEGNGRRLIIDYLWESQLLKIVLWFVFGIESNIFALINKNKRQCKYLALSIYELLVNHLGNIVEEITNKRIQGHKSADLKSQRNKVEKRIRSWHTLLEQIADEKDKELYVHFQWTHYCFLQYTCDIVDSRLSETLTSLENTIKDSDSSLDIAYPNYRHIPALNLNTVQSQKRKIRIIQNITVEDISEDTNSDTHSENHLETLEKVLLHILHPSTNHSNIDEEMVSFIFNSPFLLKIRLWGVLFSSYVKKSSIQDVQRIYFHVLDFMKGALTSPVYKESNPHGRHQMLLTVLTAIGYLSSQLTAILNSNRWESSDFVLEDYMFEKLLQTFFFFYTVLFYESSAVNDVSNKSFFKRASKSSGKMKDIMIDLATLILYYYDLQAKLRTPAEQGIETTELIWSLHTLFGHFHFCDASNGKFLDLAEKLLCQFINNDSFLQLKQILWCRYHYAIASDNFSPDLHDTKAVEMEKIHSLPLGTYLIKLQYQNKNPYLSSSKTTLKQIMDNIIEKIGDPSTLDNHIISRNSFLLNEYLSRPITADLLKHTFSGATSLYLTSPNDELQQGMTAGLFYVSSLQSLGLYKMRKKSMQARPSELDSIIRMLKNDIIYNTNRFESWILLGKCYSYIVEDDLIWTSDKITVPEKKDVIALTQRKAILCYLMAISIYYSKLDRTIDDKKIILEALDDLGSMLISGYYNPMNKLCFSWKSSAENTMRLSETGEVVMEKTKKITTISDFNIEQSIFLCFNRACSLSGDIKSQDDVFVLNWSSFYNLAKFFFKTDGGNNCKLVAKYITQGCQIAYESSPAKDPIIEPHYLLVNACYKWVKRGVIGVNEALTLLSKDNQFFQEQEEFWVNDEGLAWDYQEKFFFDKIIRLLRHLLSVDKKKWQHRPRYRIARILFDDLGDVNGALEEMDSLISAKSINKNLVNIWKPDFERPGKHFIYTYQYLVLYLDLLFAIKDFNTTGLVIKKLRRFGSGTVNVNELLERAINVYTQSAKIKLQLQDKSYVEQILPTLNYQEFLKISEQLNQVFDQGKYPEEISSGLKLAFQLKKGHSGIAFDSVCLGIYFEYLYFPLARQDQSLTDVNDENNPALPSSGSVTSKSTPDPTSKPSAIKKRVTKKEVFDRVRLLVDKIT.

Disordered stretches follow at residues 301-371 (NTPS…EQEN) and 1597-1630 (DVND…IKKR). Thr-302 carries the post-translational modification Phosphothreonine. Ser-304 bears the Phosphoserine mark. Positions 339 to 353 (EEARPNKRTDEHIDS) are enriched in basic and acidic residues. A compositionally biased stretch (polar residues) spans 1597–1610 (DVNDENNPALPSSG). Over residues 1611-1625 (SVTSKSTPDPTSKPS) the composition is skewed to low complexity.

This sequence belongs to the HIR3 family. In terms of assembly, component of the HIR complex, composed of HIR1, HIR2, HIR3 and HPC2. This complex may consist of one copy of HIR1 and HIR3 and two copies of HIR2 and HPC2. The HIR complex interacts with ASF1. Interacts with RTT106.

It localises to the nucleus. Its subcellular location is the chromosome. In terms of biological role, HIR1, HIR2 and HIR3 are repressors of histone gene transcription. They are required for the periodic repression of three of the four histone gene loci during cell cycle as well as for autogenous regulation of the HTA1-HTB1 locus by H2A and H2B. Also has a role in nucleosome assembly. The protein is Histone transcription regulator 3 (HIR3) of Saccharomyces cerevisiae (strain ATCC 204508 / S288c) (Baker's yeast).